We begin with the raw amino-acid sequence, 744 residues long: Elongation factor G, mitochondrial (744 aa).

A tr-type G domain is found at 39 to 316 (EKIRNIGISA…AVIDYLPNPG (278 aa)). Residues 48-55 (AHIDSGKT), 115-119 (DTPGH), and 169-172 (NKLD) each bind GTP. A compositionally biased stretch (polar residues) spans 725–735 (VRQYQETQGAS). Positions 725–744 (VRQYQETQGASQPDKKKKKN) are disordered.

This sequence belongs to the TRAFAC class translation factor GTPase superfamily. Classic translation factor GTPase family. EF-G/EF-2 subfamily.

It is found in the mitochondrion. It functions in the pathway protein biosynthesis; polypeptide chain elongation. Its function is as follows. Mitochondrial GTPase that catalyzes the GTP-dependent ribosomal translocation step during translation elongation. During this step, the ribosome changes from the pre-translocational (PRE) to the post-translocational (POST) state as the newly formed A-site-bound peptidyl-tRNA and P-site-bound deacylated tRNA move to the P and E sites, respectively. Catalyzes the coordinated movement of the two tRNA molecules, the mRNA and conformational changes in the ribosome. Essential during development as it acts as a retrograde signal from mitochondria to the nucleus to slow down cell proliferation if mitochondrial energy output is low. This Drosophila pseudoobscura pseudoobscura (Fruit fly) protein is Elongation factor G, mitochondrial.